Consider the following 1063-residue polypeptide: Valine--tRNA ligase, mitochondrial (1063 aa).

A mitochondrion-targeting transit peptide spans M1–H26. The disordered stretch occupies residues F25–E53. Over residues R42 to E53 the composition is skewed to basic and acidic residues. The short motif at P146–H156 is the 'HIGH' region element. A 'KMSKS' region motif is present at residues K658–S662. K661 contributes to the ATP binding site.

Belongs to the class-I aminoacyl-tRNA synthetase family.

It is found in the mitochondrion. It catalyses the reaction tRNA(Val) + L-valine + ATP = L-valyl-tRNA(Val) + AMP + diphosphate. Its function is as follows. Catalyzes the attachment of valine to tRNA(Val) in a two-step reaction: valine is first activated by ATP to form Val-AMP and then transferred to the acceptor end of tRNA(Val). The protein is Valine--tRNA ligase, mitochondrial (VARS2) of Homo sapiens (Human).